Consider the following 504-residue polypeptide: Putative F-box/FBD/LRR-repeat protein At3g59240 (504 aa).

Residues K7 to S60 form the F-box domain. LRR repeat units lie at residues H69–C95, R145–S171, W173–D198, T286–C312, D329–G354, C369–E396, and D403–Y428. One can recognise an FBD domain in the interval S382 to H427.

This Arabidopsis thaliana (Mouse-ear cress) protein is Putative F-box/FBD/LRR-repeat protein At3g59240.